The sequence spans 269 residues: 3-methyl-2-oxobutanoate hydroxymethyltransferase (269 aa).

Asp-50 and Asp-89 together coordinate Mg(2+). 3-methyl-2-oxobutanoate contacts are provided by residues 50-51 (DS), Asp-89, and Lys-118. Glu-120 is a binding site for Mg(2+). The active-site Proton acceptor is the Glu-187.

The protein belongs to the PanB family. As to quaternary structure, homodecamer; pentamer of dimers. The cofactor is Mg(2+).

It is found in the cytoplasm. It carries out the reaction 3-methyl-2-oxobutanoate + (6R)-5,10-methylene-5,6,7,8-tetrahydrofolate + H2O = 2-dehydropantoate + (6S)-5,6,7,8-tetrahydrofolate. Its pathway is cofactor biosynthesis; (R)-pantothenate biosynthesis; (R)-pantoate from 3-methyl-2-oxobutanoate: step 1/2. Its function is as follows. Catalyzes the reversible reaction in which hydroxymethyl group from 5,10-methylenetetrahydrofolate is transferred onto alpha-ketoisovalerate to form ketopantoate. The sequence is that of 3-methyl-2-oxobutanoate hydroxymethyltransferase from Aliarcobacter butzleri (strain RM4018) (Arcobacter butzleri).